The chain runs to 122 residues: Large ribosomal subunit protein uL14c (122 aa).

The protein belongs to the universal ribosomal protein uL14 family. Part of the 50S ribosomal subunit.

It localises to the plastid. Its subcellular location is the chloroplast. In terms of biological role, binds to 23S rRNA. This is Large ribosomal subunit protein uL14c from Coffea arabica (Arabian coffee).